Here is a 337-residue protein sequence, read N- to C-terminus: DNA-directed RNA polymerase subunit alpha (337 aa).

Positions 1 to 233 are alpha N-terminal domain (alpha-NTD); it reads MIREKVTVST…DLFIPFLHME (233 aa). Residues 266-337 form an alpha C-terminal domain (alpha-CTD) region; it reads KLALKSIFID…FAIDLPKNQF (72 aa).

Belongs to the RNA polymerase alpha chain family. As to quaternary structure, in plastids the minimal PEP RNA polymerase catalytic core is composed of four subunits: alpha, beta, beta', and beta''. When a (nuclear-encoded) sigma factor is associated with the core the holoenzyme is formed, which can initiate transcription.

It is found in the plastid. It localises to the chloroplast. The catalysed reaction is RNA(n) + a ribonucleoside 5'-triphosphate = RNA(n+1) + diphosphate. DNA-dependent RNA polymerase catalyzes the transcription of DNA into RNA using the four ribonucleoside triphosphates as substrates. In Ipomoea purpurea (Common morning glory), this protein is DNA-directed RNA polymerase subunit alpha.